A 364-amino-acid chain; its full sequence is Homeobox protein Nkx-6.1 (364 aa).

Positions 35 to 134 (LYPATYPPLP…SSSSSASATS (100 aa)) are disordered. Composition is skewed to low complexity over residues 48 to 92 (PSSS…LSAA) and 109 to 134 (ASGA…SATS). The tract at residues 101-268 (LSRPSMPVAS…KYLAGPERAR (168 aa)) is repressor domain. Arg189 bears the Asymmetric dimethylarginine mark. Positions 236 to 295 (RKHTRPTFSGQQIFALEKTFEQTKYLAGPERARLAYSLGMTESQVKVWFQNRRTKWRKKH) form a DNA-binding region, homeobox. The tract at residues 294 to 364 (KHAAEMATAK…LHASEAEGSS (71 aa)) is disordered. Over residues 304–317 (KKQDSETERLKGTS) the composition is skewed to basic and acidic residues. An involved in DNA-binding region spans residues 306–364 (QDSETERLKGTSENEEEDDDYNKPLDPNSDDEKITQLLKKHKSSSGGLLLHASEAEGSS).

Pancreatic beta cells.

It is found in the nucleus. Together with NKX2-2 and IRX3 acts to restrict the generation of motor neurons to the appropriate region of the neural tube. Belongs to the class II proteins of neuronal progenitor factors, which are induced by SHH signals. Transcription factor which binds to specific A/T-rich DNA sequences in the promoter regions of a number of genes. Involved in transcriptional regulation in islet beta cells. Binds to the insulin promoter and is involved in regulation of the insulin gene. In Mesocricetus auratus (Golden hamster), this protein is Homeobox protein Nkx-6.1 (NKX6-1).